Reading from the N-terminus, the 593-residue chain is Salivary alpha-glucosidase (593 aa).

The first 19 residues, 1 to 19, serve as a signal peptide directing secretion; sequence MPPLGVLLLLVALGHSTQG. 6 residues coordinate Ca(2+): aspartate 49, aspartate 51, aspartate 53, isoleucine 55, aspartate 57, and asparagine 130. Asparagine 130 and asparagine 163 each carry an N-linked (GlcNAc...) asparagine glycan. Ca(2+) is bound by residues aspartate 201, tyrosine 235, leucine 236, and glutamate 238. N-linked (GlcNAc...) asparagine glycosylation is found at asparagine 295, asparagine 310, asparagine 338, asparagine 414, asparagine 445, and asparagine 453. Asparagine 338 contributes to the N-acetyl-beta-D-glucosamine binding site.

This sequence belongs to the glycosyl hydrolase 13 family. In terms of tissue distribution, saliva (at protein level). Proximal lateral lobes of the salivary gland (at protein level).

It localises to the secreted. It catalyses the reaction Hydrolysis of terminal, non-reducing (1-&gt;4)-linked alpha-D-glucose residues with release of alpha-D-glucose.. Its function is as follows. Functions as a glucosidase that shows high activity toward sucrose, a major component of nectar. Assists the mosquito in its sugar-feeding capabilities. This Anopheles gambiae (African malaria mosquito) protein is Salivary alpha-glucosidase.